We begin with the raw amino-acid sequence, 254 residues long: uncharacterized protein (254 aa).

The interval 60 to 161 (PKSPTTTSIS…PEIPQAAPGT (102 aa)) is disordered. Low complexity-rich tracts occupy residues 63 to 77 (PTTT…STTP) and 89 to 146 (TPIP…TTTS).

This is an uncharacterized protein from Caenorhabditis elegans.